Here is a 194-residue protein sequence, read N- to C-terminus: MRWSMLVLLLLSCSQTFAQRPGDICPQNPHHGQDVTANTVPTVDPKLFNKRRYRSPRVLFSEHPPDSEPSRSRTKRKAGPPQHRGVYSVCESISHWEGNKTKATDITGNEVTVLPDVIINNSKKKQYFFETTCSSGRTGGSGCLGIDARHWNSYCTNSHTFVRALTSFKNLVAWRLIRINVACVCVLSRKSWRA.

The first 18 residues, 1-18 (MRWSMLVLLLLSCSQTFA), serve as a signal peptide directing secretion. Residues 19–76 (QRPGDICPQNPHHGQDVTANTVPTVDPKLFNKRRYRSPRVLFSEHPPDSEPSRSRTKR) constitute a propeptide that is removed on maturation. The segment at 54–84 (RSPRVLFSEHPPDSEPSRSRTKRKAGPPQHR) is disordered. Disulfide bonds link cysteine 90/cysteine 155, cysteine 133/cysteine 183, and cysteine 143/cysteine 185. N-linked (GlcNAc...) asparagine glycans are attached at residues asparagine 99 and asparagine 120.

The protein belongs to the NGF-beta family. Homodimer.

It is found in the secreted. Functionally, nerve growth factor is important for the development and maintenance of the sympathetic and sensory nervous systems. It stimulates division and differentiation of sympathetic and embryonic sensory neurons. This chain is Nerve growth factor (ngf), found in Danio rerio (Zebrafish).